Consider the following 75-residue polypeptide: Cytochrome c oxidase subunit 6C (75 aa).

Residues 1 to 13 (MASEVLAKPQMRG) lie on the Mitochondrial matrix side of the membrane. The chain crosses the membrane as a helical span at residues 14–54 (LLARRLRIHMVGAFLISLGVAALYKFGVAEPRKKAYADFYK). Over 55–75 (NYSPEKDFEEMKKAGVFRSIK) the chain is Mitochondrial intermembrane.

This sequence belongs to the cytochrome c oxidase subunit 6c family. Component of the cytochrome c oxidase (complex IV, CIV), a multisubunit enzyme composed of 14 subunits. The complex is composed of a catalytic core of 3 subunits MT-CO1, MT-CO2 and MT-CO3, encoded in the mitochondrial DNA, and 11 supernumerary subunits COX4I, COX5A, COX5B, COX6A, COX6B, COX6C, COX7A, COX7B, COX7C, COX8 and NDUFA4, which are encoded in the nuclear genome. The complex exists as a monomer or a dimer and forms supercomplexes (SCs) in the inner mitochondrial membrane with NADH-ubiquinone oxidoreductase (complex I, CI) and ubiquinol-cytochrome c oxidoreductase (cytochrome b-c1 complex, complex III, CIII), resulting in different assemblies (supercomplex SCI(1)III(2)IV(1) and megacomplex MCI(2)III(2)IV(2)).

It is found in the mitochondrion inner membrane. It participates in energy metabolism; oxidative phosphorylation. Its function is as follows. Component of the cytochrome c oxidase, the last enzyme in the mitochondrial electron transport chain which drives oxidative phosphorylation. The respiratory chain contains 3 multisubunit complexes succinate dehydrogenase (complex II, CII), ubiquinol-cytochrome c oxidoreductase (cytochrome b-c1 complex, complex III, CIII) and cytochrome c oxidase (complex IV, CIV), that cooperate to transfer electrons derived from NADH and succinate to molecular oxygen, creating an electrochemical gradient over the inner membrane that drives transmembrane transport and the ATP synthase. Cytochrome c oxidase is the component of the respiratory chain that catalyzes the reduction of oxygen to water. Electrons originating from reduced cytochrome c in the intermembrane space (IMS) are transferred via the dinuclear copper A center (CU(A)) of subunit 2 and heme A of subunit 1 to the active site in subunit 1, a binuclear center (BNC) formed by heme A3 and copper B (CU(B)). The BNC reduces molecular oxygen to 2 water molecules using 4 electrons from cytochrome c in the IMS and 4 protons from the mitochondrial matrix. The protein is Cytochrome c oxidase subunit 6C (COX6C) of Saimiri sciureus (Common squirrel monkey).